A 2115-amino-acid chain; its full sequence is Nuclear mitotic apparatus protein 1 (2115 aa).

Residues 1–212 (MTLHATRGAA…SPMGDILQTP (212 aa)) are head (Globular). At serine 162 the chain carries Phosphoserine. Threonine 163 is subject to Phosphothreonine. A phosphoserine mark is found at serine 169 and serine 203. Phosphothreonine is present on threonine 211. The stretch at 213–1699 (QFQMRRLKKQ…ADQQLRDLGK (1487 aa)) forms a coiled coil. Serine 271 is subject to Phosphoserine. At lysine 379 the chain carries N6-acetyllysine. A phosphoserine mark is found at serine 388 and serine 395. Residues 549–560 (LRHQVEQLSSSL) are compositionally biased toward low complexity. Disordered regions lie at residues 549-593 (LRHQ…EERE) and 746-766 (LVEQHKRERKELEEERAGRKG). Positions 561–581 (KQKEQQLKEVAEKQEATRQDH) are enriched in basic and acidic residues. Serine 820 carries the post-translational modification Phosphoserine. Lysine 891 carries the N6-acetyllysine modification. Basic and acidic residues-rich tracts occupy residues 926 to 950 (AGEQQETASRELVKEPARAGDRQPE) and 996 to 1013 (QEERGQQEREVARLTQER). Disordered regions lie at residues 926-958 (AGEQQETASRELVKEPARAGDRQPEWLEEQQGR) and 988-1013 (LMESQGQQQEERGQQEREVARLTQER). Threonine 1047 is subject to Phosphothreonine; by PLK1. A compositionally biased stretch (basic and acidic residues) spans 1090–1102 (LKEQLAKKEKEHA). Disordered stretches follow at residues 1090-1225 (LKEQ…RKNS) and 1275-1296 (ETASNSARAAERSSALREEVQS). Composition is skewed to low complexity over residues 1103–1112 (SGSGAQSEAA) and 1133–1142 (EQQCQKQQEQ). A compositionally biased stretch (basic and acidic residues) spans 1145–1163 (SLERSLEAERASRAERDSA). Position 1187 is a phosphoserine (serine 1187). The segment covering 1198-1224 (KVQDHSKAEDEWKAQVARGRQEAERKN) has biased composition (basic and acidic residues). Position 1225 is a phosphoserine (serine 1225). The span at 1283–1296 (AAERSSALREEVQS) shows a compositional bias: basic and acidic residues. At lysine 1511 the chain carries N6-acetyllysine. Serine 1601 is subject to Phosphoserine. A Glycyl lysine isopeptide (Lys-Gly) (interchain with G-Cter in SUMO2) cross-link involves residue lysine 1699. The segment at 1699-1876 (KFQVATDALK…NSALLSLPGY (178 aa)) is membrane-binding domain 1. The interval 1700–2115 (FQVATDALKS…TPRAKGKAKH (416 aa)) is tail (Globular). Residues serine 1721, serine 1724, and serine 1728 each carry the phosphoserine modification. The segment at 1734–1761 (PLSITSKLPRTQPDGTSVPGEPASPISQ) is disordered. Over residues 1735-1748 (LSITSKLPRTQPDG) the composition is skewed to polar residues. Residues 1742–1748 (PRTQPDG) carry the Tankyrase-binding domain motif. Residues serine 1757 and serine 1760 each carry the phosphoserine modification. Lysine 1766 participates in a covalent cross-link: Glycyl lysine isopeptide (Lys-Gly) (interchain with G-Cter in SUMO1); alternate. Lysine 1766 is covalently cross-linked (Glycyl lysine isopeptide (Lys-Gly) (interchain with G-Cter in SUMO2); alternate). Phosphoserine; by PLK1 is present on residues serine 1769 and serine 1772. Residue tyrosine 1774 is modified to Phosphotyrosine. Threonine 1776 carries the phosphothreonine modification. A Phosphoserine modification is found at serine 1788. The interval 1788-1810 (SSLDSLGDVFLDSGRKTRSARRR) is 4.1-binding domain. The residue at position 1789 (serine 1789) is a Phosphoserine; by PLK1. Residues serine 1792 and serine 1800 each carry the phosphoserine modification. Threonine 1804 is subject to Phosphothreonine. A Glycyl lysine isopeptide (Lys-Gly) (interchain with G-Cter in SUMO2) cross-link involves residue lysine 1822. 2 disordered regions span residues 1826 to 1901 (EEPD…GRNS) and 1955 to 2115 (EMKT…KAKH). A phosphoserine mark is found at serine 1830 and serine 1833. Over residues 1830–1857 (SANSSFYSTRSAPASQASLRATSSTQSL) the composition is skewed to polar residues. Serine 1834 bears the Phosphoserine; by PLK1 mark. At tyrosine 1836 the chain carries Phosphotyrosine. At serine 1840 the chain carries Phosphoserine. Phosphoserine; alternate is present on serine 1844. The O-linked (GlcNAc) serine; alternate glycan is linked to serine 1844. 2 positions are modified to phosphoserine: serine 1862 and serine 1887. Over residues 1879 to 1891 (TTRSSARRSQAGV) the composition is skewed to polar residues. The tract at residues 1882 to 1985 (SSARRSQAGV…AEGTGITTRQ (104 aa)) is tubulin-binding domain. Residues 1892 to 1926 (SSGAPPGRNSFYMGTCQDEPEQLDDWNRIAELQQR) form a GPSM2-binding domain region. Residues 1955–1966 (EMKTGDPQETLR) show a composition bias toward basic and acidic residues. The residue at position 1969 (serine 1969) is a Phosphoserine. A membrane-binding domain 2 region spans residues 1981 to 2060 (ITTRQQRKRV…SILNTPKKLG (80 aa)). The Nuclear localization signal motif lies at 1984-1989 (RQQRKR). Serine 1991 carries the phosphoserine modification. Residue threonine 2000 is modified to Phosphothreonine. Position 2003 is a phosphoserine (serine 2003). A Phosphothreonine; by CDK1 modification is found at threonine 2015. Residues 2015–2032 (TPRDRHEGRKQSTTEAQK) show a composition bias toward basic and acidic residues. Serine 2047 bears the Phosphoserine mark. Threonine 2055 is modified (phosphothreonine; by CDK1). 2 positions are modified to phosphoserine: serine 2062 and serine 2077. Position 2087 is a phosphoserine; by CDK1 (serine 2087). The span at 2089–2108 (RIATTTASAATAAAIGATPR) shows a compositional bias: low complexity. Threonine 2106 bears the Phosphothreonine; by CDK1 mark.

In terms of assembly, homodimer. Also forms multiarm oligomers by association of C-terminal tail domains, oligomers may further assemble to form a hexagonal nuclear lattice-like network. Associates with the dynein-dynactin complex; this association promotes the transport and accumulation of NUMA1 at the mitotic spindle poles that is inhibited by the BRISC complex in a PLK1-dependent manner. Part of a spindle orientation complex at least composed of GNAI1, GPSM2 and NUMA1. Interacts (via C-terminus) with microtubules (MTs); this interaction is direct and promotes both MT bundle formation and stability in a dynein-dynactin complex- and CDK1-independent manner. Interacts with EPB41 and EPB41L2; these interactions are negatively regulated by CDK1 during metaphase and are important for anaphase-specific localization of NUMA1 in symmetrically dividing cells. Interacts (via C-terminus) with GPSM2 (via TPR repeats); this interaction is direct, prevented by competitive binding of INSC, is inhibited in a PLK1-dependent manner, blocks the association of NUMA1 with MTs and inhibits NUMA1-induced MT bundle formation, prevents the association of NUMA1 with SPAG5, induces mitotic spindle pole localization of GPSM2, both metaphase cell cortex localization of NUMA1 and mitotic spindle organization. Does not interact with GPSM2 during anaphase. Interacts (via C-terminus) with the nuclear importin alpha/importin beta receptor; this interaction is inhibited by RanGTP. Interacts (via C-terminus) with KPNB1; this interaction is inhibited by RanGTP and the BRISC complex. Interacts with ABRAXAS2 and the BRISC complex; these interactions regulate mitotic spindle assembly. Interacts (via N-terminal end of the coiled-coil domain) with RAE1; this interaction promotes mitotic spindle formation. Interacts (via C-terminus) with SPAG5 (via C-terminus); this interaction promotes the recruitment of SPAG5 to the MTs at spindle poles in a dynein-dynactin-dependent manner and regulates mitotic spindle organization and proper chromosome alignment during mitosis. Interacts with TNKS; this interaction occurs at the onset of mitosis. Interacts with TNKS2. Interacts with tubulin. Interacts with KHDC3L (via C-terminus). Phosphorylation and dephosphorylation on Thr-2055 regulates the extent of cortical NUMA1 and the dynein-dynactin complex localization during mitotic metaphase and anaphase. In metaphase, phosphorylation on Thr-2055 occurs in a kinase CDK1-dependent manner; this phosphorylation maintains low levels of cortical dynein-dynactin complex at metaphase, and hence proper spindle positioning. In anaphase, dephosphorylated on Thr-2055 by phosphatase PPP2CA; this dephosphorylation stimulates its membrane association and with the dynein-dynactin complex its enrichment at the cell cortex, and hence robust spindle elongation. Probably also phosphorylated on Thr-2015 and Ser-2087 by CDK1; these phosphorylations may regulate its cell cortex recruitment during metaphase and anaphase. Phosphorylated on Thr-1047, Ser-1769, Ser-1772, Ser-1789 and Ser-1834 by PLK1; these phosphorylations induce cortical dynein-dynactin complex dissociation from the NUMA1-GPSM2 complex and negatively regulates cortical dynein-dynactin complex localization. Post-translationally, ADP-ribosylated by TNKS at the onset of mitosis; ADP-ribosylation is not required for its localization to spindle poles. In terms of processing, O-glycosylated during cytokinesis at sites identical or close to phosphorylation sites, this interferes with the phosphorylation status. Ubiquitinated with 'Lys-63'-linked polyubiquitin chains. Deubiquitination by the BRISC complex is important for the incorporation of NUMA1 into mitotic spindle poles and normal spindle pole function, probably by modulating interactions between NUMA1, dynein-dynactin complex and importin-beta.

It localises to the nucleus. The protein localises to the nucleoplasm. Its subcellular location is the nucleus matrix. It is found in the chromosome. The protein resides in the cytoplasm. It localises to the cytoskeleton. The protein localises to the microtubule organizing center. Its subcellular location is the centrosome. It is found in the spindle pole. The protein resides in the cell cortex. It localises to the cell membrane. The protein localises to the lateral cell membrane. Its subcellular location is the cytosol. Functionally, microtubule (MT)-binding protein that plays a role in the formation and maintenance of the spindle poles and the alignement and the segregation of chromosomes during mitotic cell division. Functions to tether the minus ends of MTs at the spindle poles, which is critical for the establishment and maintenance of the spindle poles. Plays a role in the establishment of the mitotic spindle orientation during metaphase and elongation during anaphase in a dynein-dynactin-dependent manner. In metaphase, part of a ternary complex composed of GPSM2 and G(i) alpha proteins, that regulates the recruitment and anchorage of the dynein-dynactin complex in the mitotic cell cortex regions situated above the two spindle poles, and hence regulates the correct oritentation of the mitotic spindle. During anaphase, mediates the recruitment and accumulation of the dynein-dynactin complex at the cell membrane of the polar cortical region through direct association with phosphatidylinositol 4,5-bisphosphate (PI(4,5)P2), and hence participates in the regulation of the spindle elongation and chromosome segregation. Also binds to other polyanionic phosphoinositides, such as phosphatidylinositol 3-phosphate (PIP), lysophosphatidic acid (LPA) and phosphatidylinositol triphosphate (PIP3), in vitro. Also required for proper orientation of the mitotic spindle during asymmetric cell divisions. Plays a role in mitotic MT aster assembly. Involved in anastral spindle assembly. Positively regulates TNKS protein localization to spindle poles in mitosis. Highly abundant component of the nuclear matrix where it may serve a non-mitotic structural role, occupies the majority of the nuclear volume. Required for epidermal differentiation and hair follicle morphogenesis. In Homo sapiens (Human), this protein is Nuclear mitotic apparatus protein 1.